A 124-amino-acid chain; its full sequence is Small ribosomal subunit protein uS12 (124 aa).

Positions 1-32 (MPTIQQLVRKGRQDKVEKTKTPALKGSPQRRG) are disordered. The span at 11-20 (GRQDKVEKTK) shows a compositional bias: basic and acidic residues. Aspartate 89 carries the post-translational modification 3-methylthioaspartic acid.

This sequence belongs to the universal ribosomal protein uS12 family. In terms of assembly, part of the 30S ribosomal subunit. Contacts proteins S8 and S17. May interact with IF1 in the 30S initiation complex.

Its function is as follows. With S4 and S5 plays an important role in translational accuracy. In terms of biological role, interacts with and stabilizes bases of the 16S rRNA that are involved in tRNA selection in the A site and with the mRNA backbone. Located at the interface of the 30S and 50S subunits, it traverses the body of the 30S subunit contacting proteins on the other side and probably holding the rRNA structure together. The combined cluster of proteins S8, S12 and S17 appears to hold together the shoulder and platform of the 30S subunit. The chain is Small ribosomal subunit protein uS12 from Frankia alni (strain DSM 45986 / CECT 9034 / ACN14a).